The sequence spans 630 residues: MDEMATTQISKDELDELKEAFAKVDLNSNGFICDYELHELFKEANMPLPGYKVREIIQKLMLDGDRNKDGKISFDEFVYIFQEVKSSDIAKTFRKAINRKEGICALGGTSELSSEGTQHSYSEEEKYAFVNWINKALENDPDCRHVIPMNPNTDDLFKAVGDGIVLCKMINLSVPDTIDERAINKKKLTPFIIQENLNLALNSASAIGCHVVNIGAEDLRAGKPHLVLGLLWQIIKIGLFADIELSRNEALAALLRDGETLEELMKLSPEELLLRWANFHLENSGWQKINNFSADIKDSKAYFHLLNQIAPKGQKEGEPRIDINMSGFNETDDLKRAESMLQQADKLGCRQFVTPADVVSGNPKLNLAFVANLFNKYPALTKPENQDIDWTLLEGETREERTFRNWMNSLGVNPHVNHLYADLQDALVILQLYERIKVPVDWSKVNKPPYPKLGANMKKLENCNYAVELGKHPAKFSLVGIGGQDLNDGNQTLTLALVWQLMRRYTLNVLEDLGDGQKANDDIIVSWVNRTLNEAGKSTSIQSFKDKTISSSLAVVDLIDAIQPGCINYDLVKSGTLTEDDKHNNAKYAVSMARRIGARVYALPEDLVEVKPKMVMTVFACLMGRGMKRV.

EF-hand domains lie at 12 to 47 (DELDELKEAFAKVDLNSNGFICDYELHELFKEANMP) and 52 to 87 (KVREIIQKLMLDGDRNKDGKISFDEFVYIFQEVKSS). Ca(2+) contacts are provided by aspartate 25, asparagine 27, asparagine 29, glutamate 36, aspartate 65, asparagine 67, aspartate 69, lysine 71, and glutamate 76. Actin-binding regions lie at residues 109–382 (TSEL…ALTK) and 383–627 (PENQ…GRGM). Calponin-homology (CH) domains follow at residues 123-239 (EEEK…KIGL) and 267-378 (LSPE…NKYP). Phosphoserine occurs at positions 268, 293, 326, and 339. A Phosphothreonine modification is found at threonine 391. Calponin-homology (CH) domains lie at 397 to 506 (TREE…RRYT) and 518 to 627 (KAND…GRGM).

As to quaternary structure, monomer.

Its subcellular location is the cytoplasm. Actin-bundling protein. This chain is Plastin-3 (PLS3), found in Bos taurus (Bovine).